We begin with the raw amino-acid sequence, 505 residues long: Cyclin-dependent kinase C-1 (505 aa).

The 300-residue stretch at 26–325 (FEKLEQIGEG…AKDALDAEYF (300 aa)) folds into the Protein kinase domain. ATP contacts are provided by residues 32-40 (IGEGTYGQV) and Lys55. Tyr37 carries the phosphotyrosine modification. Catalysis depends on Asp164, which acts as the Proton acceptor. Thr198 carries the post-translational modification Phosphothreonine. Positions 336-505 (SLPTYESSHE…QRNQQYGWQQ (170 aa)) are disordered. Over residues 429–456 (PPSGNQSGGYNQSRGGYSSGSYPPQGRG) the composition is skewed to low complexity. Residues 482–491 (GQYGGSGSSG) show a composition bias toward gly residues. Over residues 492–505 (RGQNQRNQQYGWQQ) the composition is skewed to low complexity.

Belongs to the protein kinase superfamily. CMGC Ser/Thr protein kinase family. CDC2/CDKX subfamily. Interacts with CYCT1-3. In terms of tissue distribution, highly expressed in flowers. Expressed in seedlings, roots, rosettes and stems.

It catalyses the reaction L-seryl-[protein] + ATP = O-phospho-L-seryl-[protein] + ADP + H(+). The catalysed reaction is L-threonyl-[protein] + ATP = O-phospho-L-threonyl-[protein] + ADP + H(+). It carries out the reaction [DNA-directed RNA polymerase] + ATP = phospho-[DNA-directed RNA polymerase] + ADP + H(+). This chain is Cyclin-dependent kinase C-1 (CDKC-1), found in Arabidopsis thaliana (Mouse-ear cress).